We begin with the raw amino-acid sequence, 254 residues long: Anti-sigma-M factor RsmA (254 aa).

Over 1–112 (MSAADKDPDK…AARPHVHPVR (112 aa)) the chain is Cytoplasmic. A helical membrane pass occupies residues 113-133 (MIAGAAGLCAVATAIGVGAVV). Residues 134-254 (DAPPPAPSAP…LLASTVVPRA (121 aa)) are Extracellular-facing.

Interacts with ECF RNA polymerase sigma factor SigM; this should inhibit the interaction of SigM with the RNA polymerase catalytic core. In terms of processing, probably cleaved within the membrane by Rip1 near the cytoplasmic membrane interface.

It localises to the cell membrane. Its function is as follows. An anti-sigma factor for extracytoplasmic function (ECF) sigma factor SigM. ECF sigma factors are held in an inactive form by an anti-sigma factor until released by regulated intramembrane proteolysis (RIP). RIP occurs when an extracytoplasmic signal triggers a concerted proteolytic cascade to transmit information and elicit cellular responses. The membrane-spanning regulatory substrate protein is first cut extracytoplasmically (site-1 protease, S1P), then within the membrane itself (site-2 protease, S2P, Rip1), while cytoplasmic proteases finish degrading the regulatory protein, liberating the sigma factor. The sequence is that of Anti-sigma-M factor RsmA (rsmA) from Mycobacterium tuberculosis (strain ATCC 35801 / TMC 107 / Erdman).